A 163-amino-acid polypeptide reads, in one-letter code: GPI-anchored protein LLG2 (163 aa).

A signal peptide spans methionine 1 to serine 23. N-linked (GlcNAc...) asparagine glycosylation occurs at asparagine 52. A lipid anchor (GPI-anchor amidated serine) is attached at serine 135. The propeptide at aspartate 136–serine 163 is removed in mature form.

As to expression, expressed in pollen, pollen tubes, sporophytic pistil tissues, in the early stages of female gametophyte development, and in unfertilized, mature ovules.

Its subcellular location is the cell membrane. This Arabidopsis thaliana (Mouse-ear cress) protein is GPI-anchored protein LLG2.